A 497-amino-acid polypeptide reads, in one-letter code: Transcription termination/antitermination protein NusA (497 aa).

The region spanning 135 to 200 (GKILTGIVKK…RGAQLFVTRS (66 aa)) is the S1 motif domain. In terms of domain architecture, KH spans 302–372 (RHTIDIAVDS…LKIDQKISNI (71 aa)). 2 tandem repeats follow at residues 364–414 (KIDQ…KKAL) and 439–489 (GMNQ…RNIC). The interval 364–489 (KIDQKISNIL…MLIMAARNIC (126 aa)) is 2 X 51 AA approximate repeats.

It belongs to the NusA family. As to quaternary structure, monomer. Binds directly to the core enzyme of the DNA-dependent RNA polymerase and to nascent RNA.

The protein localises to the cytoplasm. Participates in both transcription termination and antitermination. This chain is Transcription termination/antitermination protein NusA, found in Buchnera aphidicola subsp. Baizongia pistaciae (strain Bp).